The following is a 786-amino-acid chain: Probable glutamine--tRNA ligase (786 aa).

Over residues 181–198 (DLAPKKKEKKPEGPKPSK) the composition is skewed to basic and acidic residues. The tract at residues 181-218 (DLAPKKKEKKPEGPKPSKDAAAAATAPGTKNQKEASPE) is disordered. The 'HIGH' region motif lies at 276–286 (PEPNGVLHIGH). ATP contacts are provided by residues 277–279 (EPN) and 283–289 (HIGHAKA). The L-glutamine site is built by aspartate 309 and tyrosine 444. ATP contacts are provided by residues threonine 463, 492 to 493 (RL), and 500 to 502 (VSK). Positions 499 to 503 (VVSKR) match the 'KMSKS' region motif.

It belongs to the class-I aminoacyl-tRNA synthetase family.

It catalyses the reaction tRNA(Gln) + L-glutamine + ATP = L-glutaminyl-tRNA(Gln) + AMP + diphosphate. In Caenorhabditis elegans, this protein is Probable glutamine--tRNA ligase.